We begin with the raw amino-acid sequence, 761 residues long: Phosphoribosylformylglycinamidine synthase subunit PurL (761 aa).

The active site involves H48. Residues Y51 and K90 each contribute to the ATP site. E92 lines the Mg(2+) pocket. Substrate contacts are provided by residues 93–96 (SHNH) and R115. The active-site Proton acceptor is the H94. D116 contributes to the Mg(2+) binding site. Q239 contacts substrate. Residue D267 coordinates Mg(2+). A substrate-binding site is contributed by 311–313 (ESQ). ATP contacts are provided by D499 and G536. N537 lines the Mg(2+) pocket. S539 is a binding site for substrate.

The protein belongs to the FGAMS family. As to quaternary structure, monomer. Part of the FGAM synthase complex composed of 1 PurL, 1 PurQ and 2 PurS subunits.

The protein localises to the cytoplasm. It catalyses the reaction N(2)-formyl-N(1)-(5-phospho-beta-D-ribosyl)glycinamide + L-glutamine + ATP + H2O = 2-formamido-N(1)-(5-O-phospho-beta-D-ribosyl)acetamidine + L-glutamate + ADP + phosphate + H(+). It functions in the pathway purine metabolism; IMP biosynthesis via de novo pathway; 5-amino-1-(5-phospho-D-ribosyl)imidazole from N(2)-formyl-N(1)-(5-phospho-D-ribosyl)glycinamide: step 1/2. Its function is as follows. Part of the phosphoribosylformylglycinamidine synthase complex involved in the purines biosynthetic pathway. Catalyzes the ATP-dependent conversion of formylglycinamide ribonucleotide (FGAR) and glutamine to yield formylglycinamidine ribonucleotide (FGAM) and glutamate. The FGAM synthase complex is composed of three subunits. PurQ produces an ammonia molecule by converting glutamine to glutamate. PurL transfers the ammonia molecule to FGAR to form FGAM in an ATP-dependent manner. PurS interacts with PurQ and PurL and is thought to assist in the transfer of the ammonia molecule from PurQ to PurL. This Thermosynechococcus vestitus (strain NIES-2133 / IAM M-273 / BP-1) protein is Phosphoribosylformylglycinamidine synthase subunit PurL.